Consider the following 367-residue polypeptide: 2-aminoethylphosphonate--pyruvate transaminase (367 aa).

An N6-(pyridoxal phosphate)lysine modification is found at Lys-193.

Belongs to the class-V pyridoxal-phosphate-dependent aminotransferase family. PhnW subfamily. As to quaternary structure, homodimer. Pyridoxal 5'-phosphate is required as a cofactor.

It carries out the reaction (2-aminoethyl)phosphonate + pyruvate = phosphonoacetaldehyde + L-alanine. Its function is as follows. Involved in phosphonate degradation. This Vibrio vulnificus (strain YJ016) protein is 2-aminoethylphosphonate--pyruvate transaminase.